The primary structure comprises 217 residues: Protein GrpE (217 aa).

A compositionally biased stretch (basic and acidic residues) spans 1–10; it reads MSDHAEHAAD. Residues 1–39 form a disordered region; the sequence is MSDHAEHAADAADTDAPEGDDAGGDDGEQAGDDGTSALS. Acidic residues predominate over residues 12–31; the sequence is ADTDAPEGDDAGGDDGEQAG.

This sequence belongs to the GrpE family. In terms of assembly, homodimer.

Its subcellular location is the cytoplasm. Functionally, participates actively in the response to hyperosmotic and heat shock by preventing the aggregation of stress-denatured proteins, in association with DnaK and GrpE. It is the nucleotide exchange factor for DnaK and may function as a thermosensor. Unfolded proteins bind initially to DnaJ; upon interaction with the DnaJ-bound protein, DnaK hydrolyzes its bound ATP, resulting in the formation of a stable complex. GrpE releases ADP from DnaK; ATP binding to DnaK triggers the release of the substrate protein, thus completing the reaction cycle. Several rounds of ATP-dependent interactions between DnaJ, DnaK and GrpE are required for fully efficient folding. The polypeptide is Protein GrpE (Halobacterium salinarum (strain ATCC 29341 / DSM 671 / R1)).